We begin with the raw amino-acid sequence, 34 residues long: Phospholipase A2 (34 aa).

Residue H18 is part of the active site. D19 contacts Ca(2+).

Belongs to the phospholipase A2 family. Group I subfamily. D49 sub-subfamily. The cofactor is Ca(2+). Post-translationally, contains 7 disulfide bonds. Expressed by the venom gland.

The protein localises to the secreted. The catalysed reaction is a 1,2-diacyl-sn-glycero-3-phosphocholine + H2O = a 1-acyl-sn-glycero-3-phosphocholine + a fatty acid + H(+). Functionally, snake venom phospholipase A2 (PLA2) that strongly inhibits platelet aggregation and has a strong anticoagulant activity. PLA2 catalyzes the calcium-dependent hydrolysis of the 2-acyl groups in 3-sn-phosphoglycerides. The protein is Phospholipase A2 of Pseudechis papuanus (Papuan black snake).